The sequence spans 354 residues: tRNA N6-adenosine threonylcarbamoyltransferase (354 aa).

Residues His-111 and His-115 each contribute to the Fe cation site. Substrate contacts are provided by residues 134-138 (LVSGG), Asp-167, Gly-180, and Asn-279. Asp-319 lines the Fe cation pocket.

It belongs to the KAE1 / TsaD family. Fe(2+) is required as a cofactor.

The protein localises to the cytoplasm. It catalyses the reaction L-threonylcarbamoyladenylate + adenosine(37) in tRNA = N(6)-L-threonylcarbamoyladenosine(37) in tRNA + AMP + H(+). Its function is as follows. Required for the formation of a threonylcarbamoyl group on adenosine at position 37 (t(6)A37) in tRNAs that read codons beginning with adenine. Is involved in the transfer of the threonylcarbamoyl moiety of threonylcarbamoyl-AMP (TC-AMP) to the N6 group of A37, together with TsaE and TsaB. TsaD likely plays a direct catalytic role in this reaction. In Neisseria meningitidis, this protein is tRNA N6-adenosine threonylcarbamoyltransferase.